The following is a 256-amino-acid chain: Transcription factor BHLH094 (256 aa).

The segment at 1-125 (MDPAPSLAAE…TPPEPPKQDY (125 aa)) is disordered. Basic and acidic residues predominate over residues 79–97 (PEAKRLKPMKSSDKNDSLR). A basic motif; degenerate region spans residues 134-147 (QATDSHSLAERARR). The bHLH domain maps to 134–184 (QATDSHSLAERARREKISERMKILQDLVPGCNKVIGKASVLDEIINYIQSL). Residues 148–184 (EKISERMKILQDLVPGCNKVIGKASVLDEIINYIQSL) form a helix-loop-helix motif region.

The protein belongs to the bHLH protein family. Interacts with RSS3. Forms a ternary complex with RSS3 and TIFY11A/JAZ9 in the nucleus.

Its subcellular location is the nucleus. Its function is as follows. Transcription factor that forms a ternary complex with RSS3 and TIFY11A/JAZ9 to negatively regulate jasmonate-responsive genes. In Oryza sativa subsp. japonica (Rice), this protein is Transcription factor BHLH094.